Consider the following 132-residue polypeptide: Rubredoxin-1 (132 aa).

A Rubredoxin-like domain is found at 1–53 (MSRYQCPDCQYIYDENKGEPHEGFHPNTSWNDIPKDWACPDCAVRDKVDFIFL). Fe cation is bound by residues C6, C9, C39, and C42. Positions 108–132 (TEVLDQASTPQVVRKSSTRKKMRNK) are disordered. Over residues 113–122 (QASTPQVVRK) the composition is skewed to polar residues. The segment covering 123–132 (SSTRKKMRNK) has biased composition (basic residues).

The protein belongs to the rubredoxin family. Requires Fe(3+) as cofactor.

The protein localises to the cytoplasm. The protein operates within hydrocarbon metabolism; alkane degradation. Functionally, not known. Probably involved in an electron transport pathway, but not required for the hydrocarbon hydroxylating system. Seems to be non-functional. The polypeptide is Rubredoxin-1 (alkF) (Ectopseudomonas oleovorans (Pseudomonas oleovorans)).